We begin with the raw amino-acid sequence, 178 residues long: N-alpha-acetyltransferase 20 (178 aa).

Residues 2–157 (TTLRAFTCDD…DAYDMRKALS (156 aa)) form the N-acetyltransferase domain. The segment at 159–178 (DTEKKSIVPLPHPVRPEDIE) is disordered.

This sequence belongs to the acetyltransferase family. ARD1 subfamily. As to quaternary structure, component of the N-terminal acetyltransferase B (NatB) complex which is composed of naa20 and naa25.

It is found in the cytoplasm. Its subcellular location is the nucleus. The enzyme catalyses N-terminal L-methionyl-L-asparaginyl-[protein] + acetyl-CoA = N-terminal N(alpha)-acetyl-L-methionyl-L-asparaginyl-[protein] + CoA + H(+). It catalyses the reaction N-terminal L-methionyl-L-glutaminyl-[protein] + acetyl-CoA = N-terminal N(alpha)-acetyl-L-methionyl-L-glutaminyl-[protein] + CoA + H(+). It carries out the reaction N-terminal L-methionyl-L-aspartyl-[protein] + acetyl-CoA = N-terminal N(alpha)-acetyl-L-methionyl-L-aspartyl-[protein] + CoA + H(+). The catalysed reaction is N-terminal L-methionyl-L-glutamyl-[protein] + acetyl-CoA = N-terminal N(alpha)-acetyl-L-methionyl-L-glutamyl-[protein] + CoA + H(+). Its function is as follows. Catalytic subunit of the NatB complex which catalyzes acetylation of the N-terminal methionine residues of peptides beginning with Met-Asp, Met-Glu, Met-Asn and Met-Gln. Proteins with cell cycle functions are overrepresented in the pool of NatB substrates. Required for maintaining the structure and function of actomyosin fibers and for proper cellular migration. In Xenopus laevis (African clawed frog), this protein is N-alpha-acetyltransferase 20 (naa20).